The sequence spans 340 residues: Tryptophan--tRNA ligase (340 aa).

Residues 11-13 (RPT) and 19-20 (GH) contribute to the ATP site. A 'HIGH' region motif is present at residues 12 to 20 (PTGKLHLGH). Asp-140 is an L-tryptophan binding site. ATP contacts are provided by residues 152–154 (GND), Leu-194, and 202–206 (KMSKS). Residues 202–206 (KMSKS) carry the 'KMSKS' region motif.

This sequence belongs to the class-I aminoacyl-tRNA synthetase family. As to quaternary structure, homodimer.

Its subcellular location is the cytoplasm. It carries out the reaction tRNA(Trp) + L-tryptophan + ATP = L-tryptophyl-tRNA(Trp) + AMP + diphosphate + H(+). Catalyzes the attachment of tryptophan to tRNA(Trp). The sequence is that of Tryptophan--tRNA ligase from Streptococcus mutans serotype c (strain ATCC 700610 / UA159).